We begin with the raw amino-acid sequence, 151 residues long: Protein archease-like (151 aa).

Aspartate 20, aspartate 150, and isoleucine 151 together coordinate Ca(2+).

The protein belongs to the archease family.

Functionally, component of the tRNA-splicing ligase complex required to facilitate the enzymatic turnover of catalytic subunit RtcB. This is Protein archease-like from Dictyostelium discoideum (Social amoeba).